Reading from the N-terminus, the 423-residue chain is Salicylate 5-hydroxylase, large oxygenase component (423 aa).

The segment at 1 to 20 is disordered; the sequence is MSEPQRLKPVFPQDPKWPGE. The Rieske domain maps to 49–168; sequence WCYVGLEAEI…VAARGGAVFA (120 aa). Cys-91, His-93, Cys-111, and His-114 together coordinate [2Fe-2S] cluster. Residues His-224, His-229, and Asp-370 each contribute to the Fe cation site.

Belongs to the bacterial ring-hydroxylating dioxygenase alpha subunit family. As to quaternary structure, the salicylate 5-hydroxylase (S5H) multicomponent enzyme system is composed of an electron transfer component and an oxygenase component. The electron transfer component is comprised of a ferredoxin reductase (NagAa) and a ferredoxin (NagAb), and the oxygenase component is formed by a large subunit (NagG) and a small subunit (NagH). Fe cation serves as cofactor. It depends on [2Fe-2S] cluster as a cofactor.

The enzyme catalyses salicylate + NADH + O2 + H(+) = 2,5-dihydroxybenzoate + NAD(+) + H2O. Its pathway is aromatic compound metabolism; naphthalene degradation. Functionally, oxygenase component of the salicylate 5-hydroxylase (S5H) multicomponent enzyme system which catalyzes the 5-hydroxylation of salicylate to gentisate. Active only on substrates with a ring-substituted carboxylate group with an adjacent hydroxyl group. Primarily active against salicylate and substituted salicylates, but not against 2-hydroxycinnamate, 3-hydroxycinnamate, 2-hydroxyphenylacetate, 3-hydroxyphenylacetate, 2-hydroxybenzophenone, 1-hydroxy-2-naphthoate, 4-methoxysalicylate or 2-hydroxyacetophenone. This chain is Salicylate 5-hydroxylase, large oxygenase component, found in Ralstonia sp.